The sequence spans 505 residues: 2,3-bisphosphoglycerate-independent phosphoglycerate mutase (505 aa).

Mn(2+)-binding residues include Asp-13 and Ser-63. The active-site Phosphoserine intermediate is the Ser-63. Substrate contacts are provided by residues His-124, 153 to 154 (RD), Arg-183, Arg-189, 254 to 257 (RADR), and Lys-330. Mn(2+) is bound by residues Asp-396, His-400, Asp-437, His-438, and His-456.

The protein belongs to the BPG-independent phosphoglycerate mutase family. In terms of assembly, monomer. Mn(2+) serves as cofactor.

It carries out the reaction (2R)-2-phosphoglycerate = (2R)-3-phosphoglycerate. The protein operates within carbohydrate degradation; glycolysis; pyruvate from D-glyceraldehyde 3-phosphate: step 3/5. Its function is as follows. Catalyzes the interconversion of 2-phosphoglycerate and 3-phosphoglycerate. The sequence is that of 2,3-bisphosphoglycerate-independent phosphoglycerate mutase from Ruegeria pomeroyi (strain ATCC 700808 / DSM 15171 / DSS-3) (Silicibacter pomeroyi).